The primary structure comprises 247 residues: MSRKKTRVTGVDALAEAFDAVNHADLLERLGVDIDRDLLVLALTHRSFANENGMLPNNERLEFLGDAVLGLAVANRLYELYPSSPESDISKMRASIVSRYGLADIAREINLGEFILLGKGELLTEGRSKDSILADTTEALLGAIFRQHGYEVARDVVLTLFHHKINHASAKGIHQDWKTTLQEELAQRKKPMVEYQTTSVGPDHDLLFTAVVYLGDVEMGRGEGPNKKLAEQEAARQAFLKLREKRA.

The region spanning 23-149 (HADLLERLGV…LLGAIFRQHG (127 aa)) is the RNase III domain. Glu-62 contributes to the Mg(2+) binding site. Asp-66 is an active-site residue. Residues Asp-135 and Glu-138 each contribute to the Mg(2+) site. Glu-138 is an active-site residue. The region spanning 176–244 (DWKTTLQEEL…ARQAFLKLRE (69 aa)) is the DRBM domain.

It belongs to the ribonuclease III family. As to quaternary structure, homodimer. The cofactor is Mg(2+).

Its subcellular location is the cytoplasm. It catalyses the reaction Endonucleolytic cleavage to 5'-phosphomonoester.. Its function is as follows. Digests double-stranded RNA. Involved in the processing of primary rRNA transcript to yield the immediate precursors to the large and small rRNAs (23S and 16S). Processes some mRNAs, and tRNAs when they are encoded in the rRNA operon. Processes pre-crRNA and tracrRNA of type II CRISPR loci if present in the organism. The polypeptide is Ribonuclease 3 (Corynebacterium efficiens (strain DSM 44549 / YS-314 / AJ 12310 / JCM 11189 / NBRC 100395)).